Here is a 408-residue protein sequence, read N- to C-terminus: Succinylornithine transaminase (408 aa).

Residue Lys-252 is modified to N6-(pyridoxal phosphate)lysine.

The protein belongs to the class-III pyridoxal-phosphate-dependent aminotransferase family. AstC subfamily. Requires pyridoxal 5'-phosphate as cofactor.

The enzyme catalyses N(2)-succinyl-L-ornithine + 2-oxoglutarate = N-succinyl-L-glutamate 5-semialdehyde + L-glutamate. Its pathway is amino-acid degradation; L-arginine degradation via AST pathway; L-glutamate and succinate from L-arginine: step 3/5. Its function is as follows. Catalyzes the transamination of N(2)-succinylornithine and alpha-ketoglutarate into N(2)-succinylglutamate semialdehyde and glutamate. Can also act as an acetylornithine aminotransferase. The protein is Succinylornithine transaminase of Salmonella heidelberg (strain SL476).